The sequence spans 206 residues: MGRFRGSITKLSRREGINLAETEKVQKYLDRRPYAPGQHGQRRGRGRPSDYSVRLREKQKLARLYGVNEKQFRNLFEEAANVPGVTGTVFLQLLERRLDNVVFRMGFASTRRQARQFVGHGHILVNGKRVDIPSYRVRIGDEISVAEGSRSMGFIQENMEAQKRRRVSPWIELNPDTFTGTFVRLPAREDLALPINENFIIEYYSR.

The disordered stretch occupies residues 28-52 (YLDRRPYAPGQHGQRRGRGRPSDYS). The S4 RNA-binding domain maps to 96–171 (RRLDNVVFRM…QKRRRVSPWI (76 aa)).

The protein belongs to the universal ribosomal protein uS4 family. Part of the 30S ribosomal subunit. Contacts protein S5. The interaction surface between S4 and S5 is involved in control of translational fidelity.

Functionally, one of the primary rRNA binding proteins, it binds directly to 16S rRNA where it nucleates assembly of the body of the 30S subunit. Its function is as follows. With S5 and S12 plays an important role in translational accuracy. The protein is Small ribosomal subunit protein uS4 of Deinococcus geothermalis (strain DSM 11300 / CIP 105573 / AG-3a).